Reading from the N-terminus, the 882-residue chain is Valine--tRNA ligase (882 aa).

A 'HIGH' region motif is present at residues 45 to 55 (PNVTGSLHIGH). The 'KMSKS' region signature appears at 525-529 (KFSKS). Lysine 528 is a binding site for ATP. The stretch at 812 to 881 (EGLIDVAKEK…VLKKGIQNLA (70 aa)) forms a coiled coil.

It belongs to the class-I aminoacyl-tRNA synthetase family. ValS type 1 subfamily. Monomer.

It localises to the cytoplasm. The enzyme catalyses tRNA(Val) + L-valine + ATP = L-valyl-tRNA(Val) + AMP + diphosphate. Its function is as follows. Catalyzes the attachment of valine to tRNA(Val). As ValRS can inadvertently accommodate and process structurally similar amino acids such as threonine, to avoid such errors, it has a 'posttransfer' editing activity that hydrolyzes mischarged Thr-tRNA(Val) in a tRNA-dependent manner. In Leptospira interrogans serogroup Icterohaemorrhagiae serovar Lai (strain 56601), this protein is Valine--tRNA ligase.